Consider the following 268-residue polypeptide: uncharacterized protein (268 aa).

The region spanning 15 to 77 (NQALIRGLRL…NAAGSYRLTI (63 aa)) is the HTH iclR-type domain. The H-T-H motif DNA-binding region spans 37-56 (LAKLAELANLNKSTAHRLLQ). The 174-residue stretch at 92–265 (IIHVASPYLE…AEQISLELGY (174 aa)) folds into the IclR-ED domain.

This is an uncharacterized protein from Haemophilus influenzae (strain ATCC 51907 / DSM 11121 / KW20 / Rd).